Consider the following 300-residue polypeptide: Acetylglutamate kinase (300 aa).

Residues 68–69, arginine 90, and asparagine 194 each bind substrate; that span reads GG.

Belongs to the acetylglutamate kinase family. ArgB subfamily.

It localises to the cytoplasm. The catalysed reaction is N-acetyl-L-glutamate + ATP = N-acetyl-L-glutamyl 5-phosphate + ADP. It participates in amino-acid biosynthesis; L-arginine biosynthesis; N(2)-acetyl-L-ornithine from L-glutamate: step 2/4. In terms of biological role, catalyzes the ATP-dependent phosphorylation of N-acetyl-L-glutamate. This is Acetylglutamate kinase from Methanocaldococcus jannaschii (strain ATCC 43067 / DSM 2661 / JAL-1 / JCM 10045 / NBRC 100440) (Methanococcus jannaschii).